The primary structure comprises 92 residues: UPF0473 protein Cbei_1107 (92 aa).

This sequence belongs to the UPF0473 family.

This chain is UPF0473 protein Cbei_1107, found in Clostridium beijerinckii (strain ATCC 51743 / NCIMB 8052) (Clostridium acetobutylicum).